A 242-amino-acid polypeptide reads, in one-letter code: Methylthioribulose-1-phosphate dehydratase (242 aa).

S87 carries the phosphoserine modification. Position 97 (C97) interacts with substrate. Residues H115 and H117 each coordinate Zn(2+). E139 (proton donor/acceptor) is an active-site residue. H195 is a binding site for Zn(2+).

The protein belongs to the aldolase class II family. MtnB subfamily. Homotetramer. Interacts with APAF1. May interact with CASP1. Zn(2+) is required as a cofactor. Isoform 1 is ubiquitously expressed. Isoform 2 is expressed at lower levels and detected in heart, brain, pancreas, liver, placenta, skeletal muscle and kidney.

The protein localises to the cytoplasm. It catalyses the reaction 5-(methylsulfanyl)-D-ribulose 1-phosphate = 5-methylsulfanyl-2,3-dioxopentyl phosphate + H2O. It functions in the pathway amino-acid biosynthesis; L-methionine biosynthesis via salvage pathway; L-methionine from S-methyl-5-thio-alpha-D-ribose 1-phosphate: step 2/6. Functionally, catalyzes the dehydration of methylthioribulose-1-phosphate (MTRu-1-P) into 2,3-diketo-5-methylthiopentyl-1-phosphate (DK-MTP-1-P). Functions in the methionine salvage pathway, which plays a key role in cancer, apoptosis, microbial proliferation and inflammation. May inhibit the CASP1-related inflammatory response (pyroptosis), the CASP9-dependent apoptotic pathway and the cytochrome c-dependent and APAF1-mediated cell death. This is Methylthioribulose-1-phosphate dehydratase from Homo sapiens (Human).